Consider the following 175-residue polypeptide: Alpha-crystallin B chain (175 aa).

Methionine 1 is modified (N-acetylmethionine). Position 19 is a phosphoserine (serine 19). The O-linked (GlcNAc) serine glycan is linked to serine 41. A phosphoserine mark is found at serine 45 and serine 59. The sHSP domain maps to 56-164 (RAPSWFDTGL…PERTIPITRE (109 aa)). Histidine 83 contacts Zn(2+). N6-acetyllysine is present on lysine 92. Zn(2+) contacts are provided by histidine 104, glutamate 106, histidine 111, and histidine 119. The disordered stretch occupies residues 142–175 (VLTVNGPRKQVSGPERTIPITREEKPAVTAAPKK). Lysine 166 bears the N6-acetyllysine mark. Threonine 170 carries O-linked (GlcNAc) threonine glycosylation.

The protein belongs to the small heat shock protein (HSP20) family. As to quaternary structure, heteromer composed of three CRYAA and one CRYAB subunits. Aggregates with homologous proteins, including the small heat shock protein HSPB1, to form large heteromeric complexes. Inter-subunit bridging via zinc ions enhances stability, which is crucial as there is no protein turn over in the lens. Interacts with HSPBAP1 and TTN/titin. Interacts with TMEM109; in the cellular response to DNA damage. Interacts with DES; binds rapidly during early stages of DES filament assembly and a reduced binding seen in the later stages. Interacts with TMED10; the interaction mediates the translocation from the cytoplasm into the ERGIC (endoplasmic reticulum-Golgi intermediate compartment) and thereby secretion. Interacts with ATP6V1A and with MTOR, forming a ternary complex.

Its subcellular location is the cytoplasm. The protein resides in the nucleus. It localises to the secreted. It is found in the lysosome. May contribute to the transparency and refractive index of the lens. Has chaperone-like activity, preventing aggregation of various proteins under a wide range of stress conditions. In lens epithelial cells, stabilizes the ATP6V1A protein, preventing its degradation by the proteasome. This Macaca fascicularis (Crab-eating macaque) protein is Alpha-crystallin B chain (CRYAB).